The primary structure comprises 193 residues: tRNA (cytidine(56)-2'-O)-methyltransferase (193 aa).

S-adenosyl-L-methionine contacts are provided by residues Leu-86 and 115–119 (GGEKV).

It belongs to the aTrm56 family. In terms of assembly, homodimer.

The protein localises to the cytoplasm. The enzyme catalyses cytidine(56) in tRNA + S-adenosyl-L-methionine = 2'-O-methylcytidine(56) in tRNA + S-adenosyl-L-homocysteine + H(+). In terms of biological role, specifically catalyzes the AdoMet-dependent 2'-O-ribose methylation of cytidine at position 56 in tRNAs. The sequence is that of tRNA (cytidine(56)-2'-O)-methyltransferase from Haloquadratum walsbyi (strain DSM 16790 / HBSQ001).